Reading from the N-terminus, the 429-residue chain is Probable imidazolonepropionase (429 aa).

Positions 161 and 194 each coordinate 4-imidazolone-5-propanoate. Residue tyrosine 161 participates in N-formimidoyl-L-glutamate binding. Histidine 262 contacts Fe(3+). Histidine 262 provides a ligand contact to Zn(2+). A 4-imidazolone-5-propanoate-binding site is contributed by glutamate 265. Fe(3+) is bound at residue aspartate 336. Zn(2+) is bound at residue aspartate 336. Asparagine 338 is an N-formimidoyl-L-glutamate binding site.

It belongs to the metallo-dependent hydrolases superfamily. HutI family. Requires Zn(2+) as cofactor. It depends on Fe(3+) as a cofactor.

It carries out the reaction 4-imidazolone-5-propanoate + H2O = N-formimidoyl-L-glutamate. It participates in amino-acid degradation; L-histidine degradation into L-glutamate; N-formimidoyl-L-glutamate from L-histidine: step 3/3. This chain is Probable imidazolonepropionase (amdhd1), found in Nematostella vectensis (Starlet sea anemone).